We begin with the raw amino-acid sequence, 179 residues long: B-cell acute lymphoblastic leukemia-expressed protein (179 aa).

Disordered stretches follow at residues 1 to 20 (MMKDIIPASSWASEESTDLQ) and 65 to 86 (RDTPPPVTSPRGDGICVSRGKA). Residues 10–20 (SWASEESTDLQ) show a composition bias toward polar residues.

The polypeptide is B-cell acute lymphoblastic leukemia-expressed protein (BLACE) (Homo sapiens (Human)).